A 477-amino-acid polypeptide reads, in one-letter code: Glycogen synthase (477 aa).

Lys15 contributes to the ADP-alpha-D-glucose binding site.

It belongs to the glycosyltransferase 1 family. Bacterial/plant glycogen synthase subfamily.

It carries out the reaction [(1-&gt;4)-alpha-D-glucosyl](n) + ADP-alpha-D-glucose = [(1-&gt;4)-alpha-D-glucosyl](n+1) + ADP + H(+). It participates in glycan biosynthesis; glycogen biosynthesis. Its function is as follows. Synthesizes alpha-1,4-glucan chains using ADP-glucose. This Streptococcus pneumoniae serotype 4 (strain ATCC BAA-334 / TIGR4) protein is Glycogen synthase.